The sequence spans 126 residues: Holo-[acyl-carrier-protein] synthase (126 aa).

Residues aspartate 9 and glutamate 58 each coordinate Mg(2+).

The protein belongs to the P-Pant transferase superfamily. AcpS family. The cofactor is Mg(2+).

The protein resides in the cytoplasm. It catalyses the reaction apo-[ACP] + CoA = holo-[ACP] + adenosine 3',5'-bisphosphate + H(+). In terms of biological role, transfers the 4'-phosphopantetheine moiety from coenzyme A to a Ser of acyl-carrier-protein. This Pectobacterium carotovorum subsp. carotovorum (strain PC1) protein is Holo-[acyl-carrier-protein] synthase.